Reading from the N-terminus, the 270-residue chain is Photosystem I chlorophyll a/b-binding protein 6, chloroplastic (270 aa).

The N-terminal 33 residues, 1 to 33 (MAFAIASALTSTLTLSTSRVQNPTQRRPHVAST), are a transit peptide targeting the chloroplast. Residues 16–36 (STSRVQNPTQRRPHVASTSST) form a disordered region. A compositionally biased stretch (polar residues) spans 19–36 (RVQNPTQRRPHVASTSST). Residue W68 participates in chlorophyll b binding. Chlorophyll a contacts are provided by F88 and E107. R112 provides a ligand contact to chlorophyll b. The helical transmembrane segment at 146-164 (YFADSTTLFVAQMVLMGWA) threads the bilayer. 2 residues coordinate chlorophyll b: E165 and R168. Chlorophyll a contacts are provided by K221, E222, N225, R227, Q239, and H254. Residues 228 to 244 (LAMLAFLGFCFQATYTS) form a helical membrane-spanning segment.

The protein belongs to the light-harvesting chlorophyll a/b-binding (LHC) protein family. As to quaternary structure, the LHC complex consists of chlorophyll a-b binding proteins. Homodimer. Binds pigments. Element of the NAD(P)H dehydrogenase-photosystem I supercomplex (NDH-PSI). Binds at least 14 chlorophylls (8 Chl-a and 6 Chl-b) and carotenoids such as lutein and neoxanthin. is required as a cofactor. Post-translationally, photoregulated by reversible phosphorylation of its threonine residues.

It is found in the plastid. The protein resides in the chloroplast thylakoid membrane. The light-harvesting complex (LHC) functions as a light receptor, it captures and delivers excitation energy to photosystems with which it is closely associated. Seems involved in the function of the photosystem I in low light conditions, when other LHCA proteins are less abundant. Required, together with LHCA5, for the formation of a full-size NAD(P)H dehydrogenase-photosystem I supercomplex (NDH-PSI) that triggers cyclic and chlororespiratory electron transport in chloroplast thylakoids, especially under stress conditions (e.g. increased light intensity). The polypeptide is Photosystem I chlorophyll a/b-binding protein 6, chloroplastic (Arabidopsis thaliana (Mouse-ear cress)).